Reading from the N-terminus, the 260-residue chain is uncharacterized protein (260 aa).

A signal peptide spans 1–22 (MGYLKGFALYISILILIVFIAG). A lipid anchor (N-palmitoyl cysteine) is attached at Cys23. Cys23 carries the S-diacylglycerol cysteine lipid modification.

It belongs to the staphylococcal tandem lipoprotein family.

It is found in the cell membrane. This is an uncharacterized protein from Staphylococcus aureus (strain MSSA476).